A 211-amino-acid polypeptide reads, in one-letter code: MGKKPVVIGVAGGSGSGKTSVARAIYEHFGDRSILVLEQDFYYKDQSHLPFEERLRTNYDHPLAFDNDLLIEHIHKLLRYEPIEKPVYDYKLHTRSDKVIHVEPKDVIILEGILVLEDERLRNLMDIKVYVDTDADIRIIRRLLRDINERGRTLESVIEQYVSVVRPMHNQFVEPTKRYADIIIPEGGHNHVAIDLMVTKIRTILEQKSFL.

12–19 (GGSGSGKT) provides a ligand contact to ATP.

It belongs to the uridine kinase family.

It localises to the cytoplasm. The enzyme catalyses uridine + ATP = UMP + ADP + H(+). It catalyses the reaction cytidine + ATP = CMP + ADP + H(+). Its pathway is pyrimidine metabolism; CTP biosynthesis via salvage pathway; CTP from cytidine: step 1/3. The protein operates within pyrimidine metabolism; UMP biosynthesis via salvage pathway; UMP from uridine: step 1/1. The sequence is that of Uridine kinase from Geobacillus sp. (strain WCH70).